The following is a 102-amino-acid chain: ATP-dependent Clp protease adapter protein ClpS (102 aa).

Residues 1–18 (MSQFDHQHLSDTEEKQEL) are compositionally biased toward basic and acidic residues. Positions 1–21 (MSQFDHQHLSDTEEKQELKPP) are disordered.

It belongs to the ClpS family. Binds to the N-terminal domain of the chaperone ClpA.

Functionally, involved in the modulation of the specificity of the ClpAP-mediated ATP-dependent protein degradation. This is ATP-dependent Clp protease adapter protein ClpS from Idiomarina loihiensis (strain ATCC BAA-735 / DSM 15497 / L2-TR).